The chain runs to 517 residues: Serine O-succinyltransferase (517 aa).

A mitochondrion-targeting transit peptide spans 1-46; that stretch reads MSPLNGVARSFPRPFQAVTRRPFRVVQPAIACPSNSRSFNHSRSLR. Polar residues predominate over residues 36 to 64; the sequence is SRSFNHSRSLRSTGSQSPAPSPRDSSNPA. Residues 36–66 form a disordered region; it reads SRSFNHSRSLRSTGSQSPAPSPRDSSNPALS. One can recognise an AB hydrolase-1 domain in the interval 134–386; sequence NVILLHTGLS…LTQQLATKKQ (253 aa). The interval 141-144 is important for substrate specificity; that stretch reads GLSA. Serine 238 functions as the Nucleophile in the catalytic mechanism. Arginine 307 serves as a coordination point for substrate. The tract at residues 413-436 is disordered; that stretch reads QPYQEQPSASTSAEQSASASETGS. Residues 416–436 are compositionally biased toward low complexity; the sequence is QEQPSASTSAEQSASASETGS. Residues aspartate 461 and histidine 498 contribute to the active site. Residue aspartate 499 coordinates substrate.

This sequence belongs to the AB hydrolase superfamily. MetX family.

The protein resides in the mitochondrion. It carries out the reaction succinyl-CoA + L-serine = O-succinyl-L-serine + CoA. It participates in amino-acid biosynthesis; L-cysteine biosynthesis; L-cysteine from L-serine: step 1/2. Transfers a succinyl group from succinyl-CoA to L-serine, forming succinyl-L-serine. Also has weak serine acetyl transferase activity and homoserine succinyl transferase activity. The chain is Serine O-succinyltransferase from Emericella nidulans (strain FGSC A4 / ATCC 38163 / CBS 112.46 / NRRL 194 / M139) (Aspergillus nidulans).